We begin with the raw amino-acid sequence, 465 residues long: MSTQNNQSIRSSCDRCRSHKLKCTVAPENTRSGSSRCTRCIRAQVTCVFGHRSQSKRSTNVKKADLRSGTNGQETTSMQASTIVPGSPDLWVGRQEVEEGLHIGSDSGPSMADGDLWAELGTNHDLSLFDITPSSLPTHNSQQQFSATDFCSAPMAPHSALSTINSQEWQLDLSEYPNQTTTGPHAIVQLSALVAKIHETSRTLEESFWTSLAESNQLKSYPIGRVLSLSQDFSTILECIWASKNMDCKQSLSCAASDNHGQDATSSFELEDVLDYGELLSTVGTSPGRSDFSTSTHSSVATTVDMPTMLLVLSCYTSLTKLYSLVFEHFESHLSHLPHSYTSQTAHASPKWGLGLQLGELPSADETCTKVYTAVQILLDAFQSVEDVVGLPRSLSAVRQQSCGKEEEGESGDVFNRASLWTDFLAKSVFKATVKSSSEEDCEEIRQLSIKVKSLKSLIRERMKL.

Positions 13 to 47 (CDRCRSHKLKCTVAPENTRSGSSRCTRCIRAQVTC) form a DNA-binding region, zn(2)-C6 fungal-type. Residues 58 to 88 (STNVKKADLRSGTNGQETTSMQASTIVPGSP) are disordered. Positions 68 to 84 (SGTNGQETTSMQASTIV) are enriched in polar residues.

The protein resides in the nucleus. In terms of biological role, transcription activator that specifically regulates the expression of the gene cluster that mediates the biosynthesis of fusarisetin A. The sequence is that of Fusarisetin A cluster transcription factor fsa5 from Fusarium sp. (strain FN080326).